A 238-amino-acid polypeptide reads, in one-letter code: MADS-box protein 04g005320 (238 aa).

Positions 1 to 61 constitute an MADS-box domain; sequence MGRGKVELKR…GKLYEFCSTS (61 aa). The K-box domain occupies 87-177; sequence SQNNYQEYMK…KTKLEENSVA (91 aa).

The protein resides in the nucleus. Its function is as follows. Probable MADS-box transcription factor that functions with J2 and EJ2 in meristem maturation. This Solanum lycopersicum (Tomato) protein is MADS-box protein 04g005320.